The sequence spans 2587 residues: Protein KINKY POLLEN (2587 aa).

A signal peptide spans 1–27 (MAAFLVMFIFTIALFVALLWVFFKSLP). N71 carries an N-linked (GlcNAc...) asparagine glycan. The interval 103-124 (PSHSSKGPRKPKTRKSSSGGKG) is disordered. Basic residues predominate over residues 108–117 (KGPRKPKTRK). N262, N281, and N485 each carry an N-linked (GlcNAc...) asparagine glycan. The tract at residues 270 to 290 (SKGEVIDSSSGNTTSEKPPKQ) is disordered. Residues 276-285 (DSSSGNTTSE) are compositionally biased toward polar residues. Residues 589–611 (GSSSKNKQEKGAHRSKPPSGRGT) form a disordered region. Residues 691-716 (TLNKEIQSTQVELETAKAIYQEFLEE) are a coiled coil. Residues 784 to 814 (QHGNRNPEEASTVTGDKQKEEPTTTPNSLDK) are disordered. N1155, N1250, N1281, and N1486 each carry an N-linked (GlcNAc...) asparagine glycan. Disordered regions lie at residues 1571–1608 (HCSK…KHPD), 1646–1673 (VDAR…DGYN), and 1729–1797 (EGNQ…PEEE). Positions 1576 to 1590 (AQMSRTSSLSGSTDR) are enriched in polar residues. N-linked (GlcNAc...) asparagine glycosylation occurs at N1595. Positions 1646–1666 (VDARSTKEKQSEPEENSHSDP) are enriched in basic and acidic residues. Over residues 1746-1760 (KQPSTGSGNLASQSK) the composition is skewed to polar residues. 5 N-linked (GlcNAc...) asparagine glycosylation sites follow: N1861, N1951, N1981, N2036, and N2278. Residues 2006-2036 (IEEVELAKIELEAKERDRMMLLDDIRKLTQN) are a coiled coil. Over residues 2274-2287 (QGSKNQSLKSSTIR) the composition is skewed to polar residues. 3 disordered regions span residues 2274-2299 (QGSK…TSSF), 2319-2360 (SMEH…KKSR), and 2442-2469 (KDDI…RPGD). Basic and acidic residues-rich tracts occupy residues 2289 to 2299 (SGRELRRTSSF), 2322 to 2336 (HQGE…DSKT), 2343 to 2359 (SVHE…DKKS), and 2442 to 2458 (KDDI…RTDQ). Residues N2513 and N2544 are each glycosylated (N-linked (GlcNAc...) asparagine). The segment at 2533–2587 (IRRHSKKFQNQNTTKGSKKTQLSPTLSPPKEEDQYESDSSSGSSAYEEFLDQNQI) is disordered. The span at 2540–2557 (FQNQNTTKGSKKTQLSPT) shows a compositional bias: polar residues. A compositionally biased stretch (low complexity) spans 2569-2579 (SDSSSGSSAYE).

Belongs to the SABRE family. As to expression, mostly expressed in pollen and roots, especially in tip-growing cells, but also present in seedlings, stems, leaves, buds, flowers, siliques and seeds.

Its subcellular location is the secreted. The protein resides in the golgi apparatus. Functionally, may be involved in membrane trafficking. Required for tip growth in pollen tubes and root hairs. The protein is Protein KINKY POLLEN of Arabidopsis thaliana (Mouse-ear cress).